The sequence spans 163 residues: MADEEKLPPGWEKRMSRSSDRVYYFNHITNASQWERPSGNSSSGGKNGQGEPARVRCSHLLVKHSQSRRPSSWRQEKITRTKEEALELINGYIQKIKSGEEDFESLASQFSDCSSAKARGDLGAFSRGQMQKPFEDASFALRTGEMSGPVFTDSGIHIILRTE.

Residues 5–39 (EKLPPGWEKRMSRSSDRVYYFNHITNASQWERPSG) enclose the WW domain. Positions 33-54 (QWERPSGNSSSGGKNGQGEPAR) are disordered. A Phosphoserine modification is found at S43. An N6-acetyllysine modification is found at K46. Residues 52–163 (PARVRCSHLL…SGIHIILRTE (112 aa)) form the PpiC domain. At S71 the chain carries Phosphoserine; by DAPK1. At S108 the chain carries Phosphoserine.

In terms of assembly, interacts with STIL. Interacts with KIF20B. Interacts with NEK6. Interacts (via WW domain) with PRKX. Interacts with BTK. Interacts (via PpiC domain) with DAPK1. Interacts with the phosphorylated form of RAF1. Interacts (via WW domain) with ATCAY; upon NGF stimulation. Interacts with PML (isoform PML-4). Interacts with BCL6. Interacts with FBXW7, disrupting FBXW7 dimerization and promoting FBXW7 autoubiquitination and degradation. Directly interacts with RBBP8/CtIP; this interaction depends upon RBBP8 phosphorylation. Interacts (via WW domain) with IRAK3/IRAK-M (when phosphorylated at 'Ser-110') in response to IL33-mediated (but not TLR4 ligand LPS) dendritic cell stimulation. Interacts with PGK1 (when phosphorylated at 'Ser-203'); the interaction is direct, occurs under hypoxic conditions, and targets PGK1 to the mitochondrion by promoting interactions with the TOM complex. In terms of processing, phosphorylation at Ser-71 by DAPK1 results in inhibition of its catalytic activity, nuclear localization, and its ability to induce centrosome amplification, chromosome instability and cell transformation. Ser-71 is dephosphorylated upon IL33-stimulation of dendritic cells.

It localises to the nucleus. Its subcellular location is the nucleus speckle. The protein localises to the cytoplasm. The catalysed reaction is [protein]-peptidylproline (omega=180) = [protein]-peptidylproline (omega=0). Its function is as follows. Peptidyl-prolyl cis/trans isomerase (PPIase) that binds to and isomerizes specific phosphorylated Ser/Thr-Pro (pSer/Thr-Pro) motifs. By inducing conformational changes in a subset of phosphorylated proteins, acts as a molecular switch in multiple cellular processes. Displays a preference for acidic residues located N-terminally to the proline bond to be isomerized. Regulates mitosis presumably by interacting with NIMA and attenuating its mitosis-promoting activity. Down-regulates kinase activity of BTK. Can transactivate multiple oncogenes and induce centrosome amplification, chromosome instability and cell transformation. Required for the efficient dephosphorylation and recycling of RAF1 after mitogen activation. Binds and targets PML and BCL6 for degradation in a phosphorylation-dependent manner. Acts as a regulator of JNK cascade by binding to phosphorylated FBXW7, disrupting FBXW7 dimerization and promoting FBXW7 autoubiquitination and degradation: degradation of FBXW7 leads to subsequent stabilization of JUN. May facilitate the ubiquitination and proteasomal degradation of RBBP8/CtIP through CUL3/KLHL15 E3 ubiquitin-protein ligase complex, hence favors DNA double-strand repair through error-prone non-homologous end joining (NHEJ) over error-free, RBBP8-mediated homologous recombination (HR). Upon IL33-induced lung inflammation, catalyzes cis-trans isomerization of phosphorylated IRAK3/IRAK-M, inducing IRAK3 stabilization, nuclear translocation and expression of pro-inflammatory genes in dendritic cells. Catalyzes cis-trans isomerization of phosphorylated phosphoglycerate kinase PGK1 under hypoxic conditions to promote its binding to the TOM complex and targeting to the mitochondrion. This Macaca fascicularis (Crab-eating macaque) protein is Peptidyl-prolyl cis-trans isomerase NIMA-interacting 1 (PIN1).